Consider the following 354-residue polypeptide: uncharacterized protein (354 aa).

It belongs to the asfivirus B354L family.

This is an uncharacterized protein from Ornithodoros (relapsing fever ticks).